The following is a 3563-amino-acid chain: D-lysergyl-peptide-synthetase subunit 1 (3563 aa).

Residues 307–706 form an adenylation (A) domain 1 region; the sequence is SCSPRPNPQA…LGRKDDQVKI (400 aa). The Carrier 1 domain occupies 844-921; the sequence is EPKSDREKLL…EIVIVSTSAT (78 aa). S881 carries the O-(pantetheine 4'-phosphoryl)serine modification. The condensation (C) domain 1 stretch occupies residues 963–1354; the sequence is EDIYPCTHLQ…EHILTEIHSN (392 aa). The interval 1397–1804 is adenylation (A) domain 2; it reads QEKCQAQPDA…RRKDAQVKIR (408 aa). The Carrier 2 domain occupies 1944–2020; the sequence is PPSNATEHEI…KLALARGVTQ (77 aa). S1981 carries the post-translational modification O-(pantetheine 4'-phosphoryl)serine. A condensation (C) domain 2 region spans residues 2067–2486; that stretch reads ERIYPCSPIQ…ALPVLDEDQM (420 aa). Positions 2511-2909 are adenylation (A) domain 3; the sequence is QCIRCPDSPS…GRNDDQVKVR (399 aa). One can recognise a Carrier 3 domain in the interval 3025–3104; that stretch reads PPRTALEAEL…RFGSYRRAGA (80 aa). O-(pantetheine 4'-phosphoryl)serine is present on S3064. The segment at 3166-3451 is cyclization (Cyc) domain; the sequence is LYFSKPMASE…VAKSTTWSSD (286 aa).

It belongs to the NRP synthetase family.

The protein operates within alkaloid biosynthesis; ergot alkaloid biosynthesis. Its function is as follows. D-lysergyl-peptide-synthetase subunit 1; part of the gene cluster that mediates the biosynthesis of fungal ergot alkaloid. DmaW catalyzes the first step of ergot alkaloid biosynthesis by condensing dimethylallyl diphosphate (DMAP) and tryptophan to form 4-dimethylallyl-L-tryptophan. The second step is catalyzed by the methyltransferase easF that methylates 4-dimethylallyl-L-tryptophan in the presence of S-adenosyl-L-methionine, resulting in the formation of 4-dimethylallyl-L-abrine. The catalase easC and the FAD-dependent oxidoreductase easE then transform 4-dimethylallyl-L-abrine to chanoclavine-I which is further oxidized by easD in the presence of NAD(+), resulting in the formation of chanoclavine-I aldehyde. Agroclavine dehydrogenase easG then mediates the conversion of chanoclavine-I aldehyde to agroclavine via a non-enzymatic adduct reaction: the substrate is an iminium intermediate that is formed spontaneously from chanoclavine-I aldehyde in the presence of glutathione. The presence of easA is not required to complete this reaction. Further conversion of agroclavine to paspalic acid is a two-step process involving oxidation of agroclavine to elymoclavine and of elymoclavine to paspalic acid, the second step being performed by the elymoclavine oxidase cloA. Paspalic acid is then further converted to D-lysergic acid. Ergopeptines are assembled from D-lysergic acid and three different amino acids by the D-lysergyl-peptide-synthetases composed each of a monomudular and a trimodular nonribosomal peptide synthetase subunit. LpsB and lpsC encode the monomodular subunits responsible for D-lysergic acid activation and incorporation into the ergopeptine backbone. LpsA1 and A2 subunits encode the trimodular nonribosomal peptide synthetase assembling the tripeptide portion of ergopeptines. LpsA1 is responsible for formation of the major ergopeptine, ergotamine, and lpsA2 for alpha-ergocryptine, the minor ergopeptine of the total alkaloid mixture elaborated by C.purpurea. D-lysergyl-tripeptides are assembled by the nonribosomal peptide synthetases and released as N-(D-lysergyl-aminoacyl)-lactams. Cyclolization of the D-lysergyl-tripeptides is performed by the Fe(2+)/2-ketoglutarate-dependent dioxygenase easH which introduces a hydroxyl group into N-(D-lysergyl-aminoacyl)-lactam at alpha-C of the aminoacyl residue followed by spontaneous condensation with the terminal lactam carbonyl group. In Claviceps purpurea (Ergot fungus), this protein is D-lysergyl-peptide-synthetase subunit 1.